Consider the following 378-residue polypeptide: Erythronate-4-phosphate dehydrogenase (378 aa).

2 residues coordinate substrate: Ser-45 and Thr-66. Residues Asp-146 and Thr-175 each coordinate NAD(+). The active site involves Arg-208. Residue Asp-232 coordinates NAD(+). The active site involves Glu-237. The active-site Proton donor is His-254. Gly-257 lines the NAD(+) pocket. Tyr-258 is a substrate binding site.

This sequence belongs to the D-isomer specific 2-hydroxyacid dehydrogenase family. PdxB subfamily. In terms of assembly, homodimer.

The protein resides in the cytoplasm. It carries out the reaction 4-phospho-D-erythronate + NAD(+) = (R)-3-hydroxy-2-oxo-4-phosphooxybutanoate + NADH + H(+). It functions in the pathway cofactor biosynthesis; pyridoxine 5'-phosphate biosynthesis; pyridoxine 5'-phosphate from D-erythrose 4-phosphate: step 2/5. Functionally, catalyzes the oxidation of erythronate-4-phosphate to 3-hydroxy-2-oxo-4-phosphonooxybutanoate. This is Erythronate-4-phosphate dehydrogenase from Salmonella dublin (strain CT_02021853).